Consider the following 736-residue polypeptide: Polyribonucleotide nucleotidyltransferase (736 aa).

Mg(2+) contacts are provided by Asp493 and Asp499. Positions 560–619 (PQHAELVVNPDAIRMIIGPGGKNIKQITTVTGAAIDINDSGKISIFAPTSEAMEQAKQMI) constitute a KH domain. Positions 629–703 (GKNYKGKVRK…SRKAVLLEEE (75 aa)) constitute an S1 motif domain. Residues 710-736 (EESSRFSKGNRNGDRSRHNNRERTRRT) form a disordered region. The span at 720–736 (RNGDRSRHNNRERTRRT) shows a compositional bias: basic and acidic residues.

This sequence belongs to the polyribonucleotide nucleotidyltransferase family. Mg(2+) serves as cofactor.

The protein resides in the cytoplasm. The catalysed reaction is RNA(n+1) + phosphate = RNA(n) + a ribonucleoside 5'-diphosphate. In terms of biological role, involved in mRNA degradation. Catalyzes the phosphorolysis of single-stranded polyribonucleotides processively in the 3'- to 5'-direction. In Lawsonia intracellularis (strain PHE/MN1-00), this protein is Polyribonucleotide nucleotidyltransferase.